The sequence spans 132 residues: Agouti-signaling protein (132 aa).

The signal sequence occupies residues 1-22 (MDVTRLLLATLLVFLCFFTAYS). Asparagine 39 carries an N-linked (GlcNAc...) asparagine glycan. The tract at residues 61-87 (QISRKEAEKKRSSKKEASMKKVARPRT) is disordered. Residues 63-79 (SRKEAEKKRSSKKEASM) are compositionally biased toward basic and acidic residues. Cystine bridges form between cysteine 93–cysteine 108, cysteine 100–cysteine 114, cysteine 107–cysteine 125, cysteine 111–cysteine 132, and cysteine 116–cysteine 123. Residues 93 to 132 (CVATRDSCKSPAPACCDPCASCQCRFFRSACSCRVLSLNC) enclose the Agouti domain.

Its subcellular location is the secreted. Functionally, involved in the regulation of melanogenesis. The binding of ASP to MC1R precludes alpha-MSH initiated signaling and thus blocks production of cAMP, leading to a down-regulation of eumelanogenesis (brown/black pigment) and thus increasing synthesis of pheomelanin (yellow/red pigment). This Macaca nigra (Celebes black macaque) protein is Agouti-signaling protein (ASIP).